Consider the following 315-residue polypeptide: Ribosomal RNA small subunit methyltransferase H (315 aa).

Residues 37–39 (AGH), Asp-57, Tyr-84, Asp-105, and Gln-112 contribute to the S-adenosyl-L-methionine site.

Belongs to the methyltransferase superfamily. RsmH family.

The protein resides in the cytoplasm. The catalysed reaction is cytidine(1402) in 16S rRNA + S-adenosyl-L-methionine = N(4)-methylcytidine(1402) in 16S rRNA + S-adenosyl-L-homocysteine + H(+). Its function is as follows. Specifically methylates the N4 position of cytidine in position 1402 (C1402) of 16S rRNA. This is Ribosomal RNA small subunit methyltransferase H from Lachnospira eligens (strain ATCC 27750 / DSM 3376 / VPI C15-48 / C15-B4) (Eubacterium eligens).